The following is a 245-amino-acid chain: CTD nuclear envelope phosphatase 1B (245 aa).

A helical membrane pass occupies residues 7–29 (CLLGVRTFHGVTSRIWSFFLYIL). The 168-residue stretch at 58–225 (NNVKRKILVL…LNLLPMLDAL (168 aa)) folds into the FCP1 homology domain.

It belongs to the dullard family.

The protein resides in the endoplasmic reticulum membrane. It localises to the nucleus membrane. The enzyme catalyses O-phospho-L-seryl-[protein] + H2O = L-seryl-[protein] + phosphate. The catalysed reaction is O-phospho-L-threonyl-[protein] + H2O = L-threonyl-[protein] + phosphate. In terms of biological role, serine/threonine protein phosphatase that may dephosphorylate and activate lipins. Lipins are phosphatidate phosphatases that catalyze the conversion of phosphatidic acid to diacylglycerol and control the metabolism of fatty acids at different levels. May indirectly modulate the lipid composition of nuclear and/or endoplasmic reticulum membranes and be required for proper nuclear membrane morphology and/or dynamics. May also indirectly regulate the production of lipid droplets and triacylglycerol. May antagonize BMP signaling. The protein is CTD nuclear envelope phosphatase 1B (ctdnep1b) of Danio rerio (Zebrafish).